Consider the following 329-residue polypeptide: NADH-quinone oxidoreductase subunit H (329 aa).

9 consecutive transmembrane segments (helical) span residues 9 to 29, 42 to 62, 75 to 95, 117 to 137, 154 to 174, 188 to 208, 238 to 258, 269 to 291, and 309 to 329; these read LIKI…ATYI, GPCY…IKLF, FIFT…MAPI, IGFL…ILAG, IQLL…LMVV, GGFL…FLIA, LKWG…SFVI, WGFI…LSMW, and WKIM…IILI.

The protein belongs to the complex I subunit 1 family. NDH-1 is composed of 14 different subunits. Subunits NuoA, H, J, K, L, M, N constitute the membrane sector of the complex.

Its subcellular location is the cell inner membrane. It catalyses the reaction a quinone + NADH + 5 H(+)(in) = a quinol + NAD(+) + 4 H(+)(out). Functionally, NDH-1 shuttles electrons from NADH, via FMN and iron-sulfur (Fe-S) centers, to quinones in the respiratory chain. The immediate electron acceptor for the enzyme in this species is believed to be ubiquinone. Couples the redox reaction to proton translocation (for every two electrons transferred, four hydrogen ions are translocated across the cytoplasmic membrane), and thus conserves the redox energy in a proton gradient. This subunit may bind ubiquinone. This Helicobacter pylori (strain ATCC 700392 / 26695) (Campylobacter pylori) protein is NADH-quinone oxidoreductase subunit H.